Here is a 138-residue protein sequence, read N- to C-terminus: Putative pre-16S rRNA nuclease (138 aa).

It belongs to the YqgF nuclease family.

It is found in the cytoplasm. Functionally, could be a nuclease involved in processing of the 5'-end of pre-16S rRNA. In Caldicellulosiruptor bescii (strain ATCC BAA-1888 / DSM 6725 / KCTC 15123 / Z-1320) (Anaerocellum thermophilum), this protein is Putative pre-16S rRNA nuclease.